Consider the following 280-residue polypeptide: Protein MGF 505-3R (280 aa).

This sequence belongs to the asfivirus MGF 505 family.

In terms of biological role, plays a role in virus cell tropism, and may be required for efficient virus replication in macrophages. This chain is Protein MGF 505-3R, found in Ornithodoros (relapsing fever ticks).